The chain runs to 423 residues: MITLRKLPIALAVAAGVLSTQAMAVDFHGYARSGIGWTASGGEQQCFQTTGAQSKYRLGNECETYAELKLGQELWKEGDKSFYLDTNVAYSVSQRDDWESTDPAFREANVQGKNLIESLPGSTIWAGKRFYQRHDVHMIDFYYWDISGPGAGLETIDLGFGKLSVAATRNSESGGSSAWIDNQRENAKYTINNVYDVRLAGLETNPGGSLELGVDYGRADTQEGYSLAPNASKDGVMLTAEHTQSLMGGFNKFVVQYATDSMTSYNTGHSQGTSVNNNGHLLRVIDHGAINLAEKWDMMYVALYQDIDLDNNNGNTWYSVGVRPMYKWTPIMSTLLEAGYDNVKSQHTGERNGQYKLTLAQQWQAGDSIWSRPAIRVFATYANWDEKWGYSDTTGVAQDGTIGTNSRGKNNEVTFGAQFEAWW.

Positions 1 to 24 (MITLRKLPIALAVAAGVLSTQAMA) are cleaved as a signal peptide.

This sequence belongs to the porin LamB (TC 1.B.3) family. Homotrimer formed of three 18-stranded antiparallel beta-barrels, containing three independent channels.

The protein resides in the cell outer membrane. It carries out the reaction beta-maltose(in) = beta-maltose(out). In terms of biological role, involved in the transport of maltose and maltodextrins. This Yersinia pestis bv. Antiqua (strain Antiqua) protein is Maltoporin 1.